The chain runs to 213 residues: Na(+)-translocating NADH-quinone reductase subunit D (213 aa).

The next 7 helical transmembrane spans lie at I21–A41, I42–L62, I77–I97, L101–L121, F131–I151, E153–S173, and L183–V203.

The protein belongs to the NqrDE/RnfAE family. As to quaternary structure, composed of six subunits; NqrA, NqrB, NqrC, NqrD, NqrE and NqrF.

It is found in the cell inner membrane. It carries out the reaction a ubiquinone + n Na(+)(in) + NADH + H(+) = a ubiquinol + n Na(+)(out) + NAD(+). Functionally, NQR complex catalyzes the reduction of ubiquinone-1 to ubiquinol by two successive reactions, coupled with the transport of Na(+) ions from the cytoplasm to the periplasm. NqrA to NqrE are probably involved in the second step, the conversion of ubisemiquinone to ubiquinol. This Chlamydia pneumoniae (Chlamydophila pneumoniae) protein is Na(+)-translocating NADH-quinone reductase subunit D.